A 465-amino-acid chain; its full sequence is Putative multidrug resistance protein MdtD (465 aa).

Helical transmembrane passes span 12–32, 49–69, 72–92, 138–158, 165–185, 195–215, 219–239, 267–287, 290–310, 329–351, 393–413, and 430–450; these read LWIV…VNTA, SVIV…GWLA, IGVK…SLMC, FVTL…GFLV, WIFL…LLLM, FDIS…LALD, GLGL…IALG, LVGS…TPIF, IGLG…IIGS, VLVN…AIMG, LLSM…GILL, and SAFL…ALIF.

This sequence belongs to the major facilitator superfamily. TCR/Tet family.

The protein localises to the cell inner membrane. The chain is Putative multidrug resistance protein MdtD from Yersinia pseudotuberculosis serotype I (strain IP32953).